A 205-amino-acid polypeptide reads, in one-letter code: Recombination protein RecR (205 aa).

The segment at 59 to 74 (CARCNTFCEGGLCDIC) adopts a C4-type zinc-finger fold. In terms of domain architecture, Toprim spans 82-177 (RRLMVVHMPA…KVSRLSQGIP (96 aa)).

The protein belongs to the RecR family.

Functionally, may play a role in DNA repair. It seems to be involved in an RecBC-independent recombinational process of DNA repair. It may act with RecF and RecO. This Neisseria gonorrhoeae (strain ATCC 700825 / FA 1090) protein is Recombination protein RecR.